A 146-amino-acid polypeptide reads, in one-letter code: Hemoglobin subunit beta (146 aa).

Val1 is subject to N-acetylvaline. One can recognise a Globin domain in the interval 2–146 (HLTPEEKVAV…VANALAHKYH (145 aa)). Thr12 is subject to Phosphothreonine. Residue Ser44 is modified to Phosphoserine. Lys59 carries the N6-acetyllysine modification. A heme b-binding site is contributed by His63. At Lys82 the chain carries N6-acetyllysine. His92 lines the heme b pocket. Cys93 bears the S-nitrosocysteine mark. An N6-acetyllysine modification is found at Lys144.

Belongs to the globin family. As to quaternary structure, heterotetramer of two alpha chains and two beta chains. As to expression, red blood cells.

Its function is as follows. Involved in oxygen transport from the lung to the various peripheral tissues. This is Hemoglobin subunit beta (HBB) from Cercocebus atys (Sooty mangabey).